We begin with the raw amino-acid sequence, 88 residues long: Small integral membrane protein 13 (88 aa).

Residues L10–V30 traverse the membrane as a helical segment. Positions T48–G60 are enriched in polar residues. Positions T48–H88 are disordered. 3 positions are modified to phosphoserine: S59, S61, and S70. A compositionally biased stretch (basic residues) spans H72–R81.

Belongs to the SMIM13 family.

The protein localises to the membrane. The protein is Small integral membrane protein 13 (Smim13) of Rattus norvegicus (Rat).